The chain runs to 647 residues: Probable potassium transport system protein Kup (647 aa).

13 consecutive transmembrane segments (helical) span residues 32-52, 74-94, 124-144, 166-186, 193-213, 230-250, 271-291, 300-320, 322-342, 361-381, 390-410, 418-438, and 443-463; these read IALM…SPLY, VISM…VLFV, LLII…AIIT, FVLP…KTGT, FGPI…HQVI, FLIE…LVLT, WFFI…AMFL, PFFL…ATAA, VIAS…AILL, IYMP…VLAF, AYGI…AIVM, TILV…FLTA, and IMEG…FLMT.

Belongs to the HAK/KUP transporter (TC 2.A.72) family.

Its subcellular location is the cell inner membrane. It catalyses the reaction K(+)(in) + H(+)(in) = K(+)(out) + H(+)(out). In terms of biological role, transport of potassium into the cell. Likely operates as a K(+):H(+) symporter. This chain is Probable potassium transport system protein Kup, found in Polynucleobacter asymbioticus (strain DSM 18221 / CIP 109841 / QLW-P1DMWA-1) (Polynucleobacter necessarius subsp. asymbioticus).